Here is a 907-residue protein sequence, read N- to C-terminus: Lateral signaling target protein 2 homolog (907 aa).

Disordered stretches follow at residues S339 to N395, L463 to A604, N662 to A688, E716 to G756, and G770 to R834. Residues D351–R361 are compositionally biased toward polar residues. Over residues E367 to P393 the composition is skewed to acidic residues. Composition is skewed to polar residues over residues L463–L475 and P486–Q495. Acidic residues predominate over residues S501 to E516. Positions H525–S549 are enriched in basic residues. Over residues S550–A565 the composition is skewed to low complexity. The segment covering Q568 to G580 has biased composition (polar residues). The span at G592–G602 shows a compositional bias: gly residues. Positions A742–A751 are enriched in polar residues. Residues G777 to S793 show a composition bias toward low complexity. The segment covering P816–Q826 has biased composition (polar residues). Residues D845–V905 form an FYVE-type zinc finger. The Zn(2+) site is built by C851, C854, C867, C870, C875, C878, C897, and C900.

The protein belongs to the lst-2 family.

Its function is as follows. Negative regulator of epidermal growth factor receptor (EGFR) signaling. This chain is Lateral signaling target protein 2 homolog, found in Culex quinquefasciatus (Southern house mosquito).